An 866-amino-acid polypeptide reads, in one-letter code: Rifampicin phosphotransferase (866 aa).

An ATP-binding region spans residues 1-313 (MSSLVLGLHE…FYIVQSRPIT (313 aa)). ATP-binding residues include Lys22, Arg116, Gly131, Thr135, Gln182, Glu296, Gln308, and Arg310. Positions 326–754 (NHVYISVGHQ…TSDGEIVTGE (429 aa)) are rifampicin-binding. The interval 410-429 (IPNDKTAPNPSRGNADMPAQ) is disordered. The interval 767 to 865 (GLPVSSGVIE…VHGTEGYIEI (99 aa)) is swivel phosphohistidine. His825 serves as the catalytic Tele-phosphohistidine intermediate.

Belongs to the rifampicin phosphotransferase family.

It catalyses the reaction rifampicin + ATP + H2O = 21-phosphorifampicin + AMP + phosphate + 2 H(+). Functionally, catalyzes the phosphorylation of rifampicin, also known as rifampin (RIF), leading to its inactivation. This Bacillus subtilis (strain 168) protein is Rifampicin phosphotransferase.